Consider the following 390-residue polypeptide: Protein STRICTOSIDINE SYNTHASE-LIKE 3 (390 aa).

The N-terminal stretch at 1–25 (MAMSILAKIFLVFAIYCAIDPFSHS) is a signal peptide. Asn95 and Asn108 each carry an N-linked (GlcNAc...) asparagine glycan.

It belongs to the strictosidine synthase family.

The protein resides in the vacuole. This is Protein STRICTOSIDINE SYNTHASE-LIKE 3 from Arabidopsis thaliana (Mouse-ear cress).